A 219-amino-acid chain; its full sequence is Ribose-5-phosphate isomerase A (219 aa).

Residues 28-31, 81-84, and 94-97 each bind substrate; these read TGST, DGAD, and KGGG. Catalysis depends on Glu103, which acts as the Proton acceptor. Position 121 (Lys121) interacts with substrate.

Belongs to the ribose 5-phosphate isomerase family. As to quaternary structure, homodimer.

It catalyses the reaction aldehydo-D-ribose 5-phosphate = D-ribulose 5-phosphate. Its pathway is carbohydrate degradation; pentose phosphate pathway; D-ribose 5-phosphate from D-ribulose 5-phosphate (non-oxidative stage): step 1/1. In terms of biological role, catalyzes the reversible conversion of ribose-5-phosphate to ribulose 5-phosphate. This Erwinia tasmaniensis (strain DSM 17950 / CFBP 7177 / CIP 109463 / NCPPB 4357 / Et1/99) protein is Ribose-5-phosphate isomerase A.